The chain runs to 301 residues: E3 ubiquitin-protein ligase RNF144B (301 aa).

Residues 26–242 (PLVTCKLCLC…YDKGPCRNKL (217 aa)) are TRIAD supradomain. Residues C30, C33, C53, C56, C121, C126, C145, C148, C153, C156, H161, C166, C191, and C194 each coordinate Zn(2+). An RING-type 1 zinc finger spans residues 30–80 (CKLCLCEQSLDKMTMLQECQCIFCTPCLKQYMVLSIREGCGSPITCPDMVC). The segment at 101-166 (QLYQRLKFER…KDAWHEESSC (66 aa)) adopts an IBR-type zinc-finger fold. Residues 191–220 (CPVCRIYIERNEGCAQMMCKNCKHTFCWYC) form an RING-type 2; atypical zinc finger. Residue C204 is part of the active site. Zn(2+) contacts are provided by C209, C212, C217, C220, H232, and C238. A helical membrane pass occupies residues 256–276 (VVGILVGLGVIALVTSPLLLL).

The protein belongs to the RBR family. RNF144 subfamily. Interacts with UBE2L3, UBE2L6 and LCMT2, as well as with BAX. Interacts with TBK1; this interaction inhibits TBK1 phosphorylation and 'Lys-63'-linked polyubiquitination. Auto-ubiquitinated.

Its subcellular location is the mitochondrion membrane. It localises to the cytoplasm. It catalyses the reaction [E2 ubiquitin-conjugating enzyme]-S-ubiquitinyl-L-cysteine + [acceptor protein]-L-lysine = [E2 ubiquitin-conjugating enzyme]-L-cysteine + [acceptor protein]-N(6)-ubiquitinyl-L-lysine.. The protein operates within protein modification; protein ubiquitination. Functionally, E3 ubiquitin-protein ligase which accepts ubiquitin from E2 ubiquitin-conjugating enzymes UBE2L3 and UBE2L6 in the form of a thioester and then directly transfers the ubiquitin to targeted substrates such as LCMT2, thereby promoting their degradation. Induces apoptosis via a p53/TP53-dependent but caspase-independent mechanism. Plays a crucial role in maintaining the genomic stability by controlling the degradation of multiple proteins involved in mitotic progression and DNA damage. Regulates epithelial homeostasis by mediating degradation of CDKN1A and isoform 2 of TP63. Plays a regulatory role in innate immunity by negatively regulating IRF3 activation and IFN-beta production. Mechanistically, inhibits TBK1 phosphorylation and 'Lys-63'-linked polyubiquitination independently of its E3 ligase activity. Alternatively, promotes 'Lys-27' and 'Lys-33'-linked ubiquitination of IFIH1/MDA5, promoting selective autophagic degradation of IFIH1/MDA5 to inhibit antiviral response. This Mus musculus (Mouse) protein is E3 ubiquitin-protein ligase RNF144B (Rnf144b).